We begin with the raw amino-acid sequence, 111 residues long: Phosphoribosyl-AMP cyclohydrolase (111 aa).

Asp80 contacts Mg(2+). Position 81 (Cys81) interacts with Zn(2+). Asp82 and Asp84 together coordinate Mg(2+). The Zn(2+) site is built by Cys97 and Cys104.

Belongs to the PRA-CH family. Homodimer. Requires Mg(2+) as cofactor. It depends on Zn(2+) as a cofactor.

It is found in the cytoplasm. The enzyme catalyses 1-(5-phospho-beta-D-ribosyl)-5'-AMP + H2O = 1-(5-phospho-beta-D-ribosyl)-5-[(5-phospho-beta-D-ribosylamino)methylideneamino]imidazole-4-carboxamide. It functions in the pathway amino-acid biosynthesis; L-histidine biosynthesis; L-histidine from 5-phospho-alpha-D-ribose 1-diphosphate: step 3/9. In terms of biological role, catalyzes the hydrolysis of the adenine ring of phosphoribosyl-AMP. The polypeptide is Phosphoribosyl-AMP cyclohydrolase (Mycobacterium marinum (strain ATCC BAA-535 / M)).